We begin with the raw amino-acid sequence, 253 residues long: Dehydration-responsive element-binding protein 1D (253 aa).

Residues 1 to 22 (MEKNTAASGQLMTSSAEATPSS) show a composition bias toward polar residues. The segment at 1–31 (MEKNTAASGQLMTSSAEATPSSPKRPAGRTK) is disordered. A DNA-binding region (AP2/ERF) is located at residues 39–98 (VFRGVRWRGCAGRWVCKVRVPGSRGDRFWIGTSDTAEETARTHDAAMLALCGASASLNFA). The interval 131–153 (RRVPAPGRGSTATATATSGDAAS) is disordered. Low complexity predominate over residues 134-153 (PAPGRGSTATATATSGDAAS).

Belongs to the AP2/ERF transcription factor family. ERF subfamily.

It is found in the nucleus. Functionally, transcriptional activator that binds specifically to the DNA sequence 5'-[AG]CCGAC-3'. Binding to the C-repeat/DRE element mediates high salinity- and dehydration-inducible transcription. The polypeptide is Dehydration-responsive element-binding protein 1D (DREB1D) (Oryza sativa subsp. indica (Rice)).